The sequence spans 155 residues: Anaerobic ribonucleoside-triphosphate reductase-activating protein (155 aa).

Positions 26, 30, and 33 each coordinate [4Fe-4S] cluster. Residues 32–34 (GCY) and Gly-74 contribute to the S-adenosyl-L-methionine site.

Belongs to the organic radical-activating enzymes family. As to quaternary structure, forms a tetramer composed of two NrdD and two NrdG subunits. The cofactor is [4Fe-4S] cluster.

It is found in the cytoplasm. The enzyme catalyses glycyl-[protein] + reduced [flavodoxin] + S-adenosyl-L-methionine = glycin-2-yl radical-[protein] + semiquinone [flavodoxin] + 5'-deoxyadenosine + L-methionine + H(+). Its function is as follows. Activation of anaerobic ribonucleoside-triphosphate reductase under anaerobic conditions by generation of an organic free radical, using S-adenosylmethionine and reduced flavodoxin as cosubstrates to produce 5'-deoxy-adenosine. This chain is Anaerobic ribonucleoside-triphosphate reductase-activating protein (nrdG), found in Haemophilus influenzae (strain ATCC 51907 / DSM 11121 / KW20 / Rd).